Reading from the N-terminus, the 387-residue chain is Cysteine desulfurase IscS (387 aa).

Residues 73–74 (AT), Asn155, Gln183, and 203–205 (SAH) contribute to the pyridoxal 5'-phosphate site. An N6-(pyridoxal phosphate)lysine modification is found at Lys206. Thr241 is a pyridoxal 5'-phosphate binding site. The active-site Cysteine persulfide intermediate is the Cys328. Cys328 provides a ligand contact to [2Fe-2S] cluster.

Belongs to the class-V pyridoxal-phosphate-dependent aminotransferase family. NifS/IscS subfamily. Homodimer. Forms a heterotetramer with IscU, interacts with other sulfur acceptors. Requires pyridoxal 5'-phosphate as cofactor.

The protein resides in the cytoplasm. It catalyses the reaction (sulfur carrier)-H + L-cysteine = (sulfur carrier)-SH + L-alanine. It functions in the pathway cofactor biosynthesis; iron-sulfur cluster biosynthesis. In terms of biological role, master enzyme that delivers sulfur to a number of partners involved in Fe-S cluster assembly, tRNA modification or cofactor biosynthesis. Catalyzes the removal of elemental sulfur atoms from cysteine to produce alanine. Functions as a sulfur delivery protein for Fe-S cluster synthesis onto IscU, an Fe-S scaffold assembly protein, as well as other S acceptor proteins. The chain is Cysteine desulfurase IscS from Helicobacter pylori (strain Shi470).